We begin with the raw amino-acid sequence, 279 residues long: Phenylalanine 3-hydroxylase (279 aa).

3 residues coordinate Fe cation: histidine 140, histidine 145, and glutamate 186.

This sequence belongs to the biopterin-dependent aromatic amino acid hydroxylase family. The cofactor is Fe(2+).

It catalyses the reaction (6R)-L-erythro-5,6,7,8-tetrahydrobiopterin + L-phenylalanine + O2 = 3-hydroxy-L-phenylalanine + (4aS,6R)-4a-hydroxy-L-erythro-5,6,7,8-tetrahydrobiopterin. In vitro, catalyzes the highly regiospecific C-3 hydroxylation of L-phenylalanine (L-Phe) to yield 3-hydroxy-L-phenylalanine (meta-Tyr), an amino acid found in bacterial secondary metabolites such as sanglifehrin A and some pacidamycins. Tetrahydrobiopterin (BH4) seems to be the physiological pterin, however the hydroxylase is also able to use 6-methyltetrahydropterin (6-MePH4). This is Phenylalanine 3-hydroxylase from Streptomyces coeruleorubidus.